We begin with the raw amino-acid sequence, 207 residues long: Dephospho-CoA kinase (207 aa).

Residues 12-207 enclose the DPCK domain; it reads LIGITGMIGG…LYSTLLGKML (196 aa). 20–25 contacts ATP; that stretch reads GGGKST.

This sequence belongs to the CoaE family.

It is found in the cytoplasm. It carries out the reaction 3'-dephospho-CoA + ATP = ADP + CoA + H(+). The protein operates within cofactor biosynthesis; coenzyme A biosynthesis; CoA from (R)-pantothenate: step 5/5. Catalyzes the phosphorylation of the 3'-hydroxyl group of dephosphocoenzyme A to form coenzyme A. This is Dephospho-CoA kinase from Leptospira interrogans serogroup Icterohaemorrhagiae serovar Lai (strain 56601).